The following is a 163-amino-acid chain: Staphylokinase (163 aa).

The first 27 residues, 1–27 (MLKRSLLFLTVLLLLFSFSSITNEVSA), serve as a signal peptide directing secretion.

This sequence belongs to the staphylokinase family.

The protein resides in the secreted. Functionally, potent plasminogen activator that converts plasminogen into plasmin. It forms a 1:1 complex with plasmin, which in turn activates other plasminogen molecules. This Staphylococcus aureus (strain MW2) protein is Staphylokinase (sak).